The chain runs to 225 residues: Cytidylate kinase (225 aa).

Residue 11–19 coordinates ATP; that stretch reads GPAGAGKST.

Belongs to the cytidylate kinase family. Type 1 subfamily.

The protein localises to the cytoplasm. It catalyses the reaction CMP + ATP = CDP + ADP. The catalysed reaction is dCMP + ATP = dCDP + ADP. This Shouchella clausii (strain KSM-K16) (Alkalihalobacillus clausii) protein is Cytidylate kinase.